Here is a 350-residue protein sequence, read N- to C-terminus: Serine-threonine kinase receptor-associated protein (350 aa).

WD repeat units follow at residues 12–56 (GHTR…GTFL), 57–96 (GHKG…ELMT), 98–137 (AHKH…AEPK), 141–179 (GHTS…EVKS), 180–212 (LNFN…HSAV), 221–262 (EAPA…ESYK), and 263–302 (GHFG…TYGL). A phosphoserine mark is found at Ser-312, Ser-335, and Ser-338. Positions 327 to 350 (EEELEEIASENSDSIYSSTPEVKA) are disordered. The segment covering 337 to 350 (NSDSIYSSTPEVKA) has biased composition (polar residues). A Phosphotyrosine modification is found at Tyr-342.

It belongs to the WD repeat STRAP family. Part of the core SMN complex that contains SMN1, GEMIN2/SIP1, DDX20/GEMIN3, GEMIN4, GEMIN5, GEMIN6, GEMIN7, GEMIN8 and STRAP/UNRIP. Part of the SMN-Sm complex that contains SMN1, GEMIN2/SIP1, DDX20/GEMIN3, GEMIN4, GEMIN5, GEMIN6, GEMIN7, GEMIN8, STRAP/UNRIP and the Sm proteins SNRPB, SNRPD1, SNRPD2, SNRPD3, SNRPE, SNRPF and SNRPG. Interacts directly with GEMIN6 and GEMIN7. Associates with the SMN complex in the cytoplasm but not in the nucleus. Also interacts with CSDE1/UNR and MAWBP. Interacts with PDPK1. Interacts with TRIM48.

The protein localises to the cytoplasm. It is found in the nucleus. Its function is as follows. The SMN complex catalyzes the assembly of small nuclear ribonucleoproteins (snRNPs), the building blocks of the spliceosome, and thereby plays an important role in the splicing of cellular pre-mRNAs. Most spliceosomal snRNPs contain a common set of Sm proteins SNRPB, SNRPD1, SNRPD2, SNRPD3, SNRPE, SNRPF and SNRPG that assemble in a heptameric protein ring on the Sm site of the small nuclear RNA to form the core snRNP (Sm core). In the cytosol, the Sm proteins SNRPD1, SNRPD2, SNRPE, SNRPF and SNRPG are trapped in an inactive 6S pICln-Sm complex by the chaperone CLNS1A that controls the assembly of the core snRNP. To assemble core snRNPs, the SMN complex accepts the trapped 5Sm proteins from CLNS1A forming an intermediate. Binding of snRNA inside 5Sm triggers eviction of the SMN complex, thereby allowing binding of SNRPD3 and SNRPB to complete assembly of the core snRNP. STRAP plays a role in the cellular distribution of the SMN complex. Negatively regulates TGF-beta signaling but positively regulates the PDPK1 kinase activity by enhancing its autophosphorylation and by significantly reducing the association of PDPK1 with 14-3-3 protein. This Bos taurus (Bovine) protein is Serine-threonine kinase receptor-associated protein (STRAP).